Reading from the N-terminus, the 699-residue chain is MNPIVKSFEYGQHTVTLETGVIARQADAAVLASMGDTTVLVTVVGKKEAEAGRDFFPLTVNYQEKTYAAGKIPGGFFKREGRPSEDETLIARLIDRPIRPLFPNGFKNEVQVIITVVSVDPQIEPDIISMIGTSAALAISGIPFSGPLGAARVGYINGEYVLNPTVAQIETSQLNLVVAGTASAVLMVESEAQALPEEVMLGSVVYGHDQQQVVINAIAEFKAEAGKPMWDWTAPVQDETLVAQIKELAEAGLGDAYKIQVKQDRYAQVAVVKAATKEALLASNPNIDLREVDNLLGSLEKKVVRGRIIRGEPRIDGREPDMIRALSVLAGVLPRTHGSALFTRGETQALVTCTLGTERDAQKIDSIMGERTNRFMLHYNFPPYSVGETGMVGSPKRREIGHGKLAWRGINAVMPSAEEFPYSVRVVSEITESNGSSSMASVCGTSLALMDAGVPIKTSVAGIAMGLVKEGDDFVVLSDILGDEDHLGDMDFKVAGTRGGITALQMDIKIEGITKEIMEIALQQAYGARVHILNVMDQAIGSHRDDISDHAPRITTIKINPEKIRDVIGKGGAVIRALTEETGTTIELEDDGTVRIASSNGEATKEAIRRIEEITSEVEVGRIYNGKVIRIVDFGAFVNILPGKDGLVHISQISDERVANVSDHLELNQEVAVKVMEVDRQGRVRLSIKEAQTKEAAAE.

The Mg(2+) site is built by D485 and D491. Residues 552-611 form the KH domain; it reads PRITTIKINPEKIRDVIGKGGAVIRALTEETGTTIELEDDGTVRIASSNGEATKEAIRRI. The S1 motif domain occupies 621–689; the sequence is GRIYNGKVIR…RQGRVRLSIK (69 aa).

The protein belongs to the polyribonucleotide nucleotidyltransferase family. As to quaternary structure, component of the RNA degradosome, which is a multiprotein complex involved in RNA processing and mRNA degradation. Mg(2+) is required as a cofactor.

The protein localises to the cytoplasm. It carries out the reaction RNA(n+1) + phosphate = RNA(n) + a ribonucleoside 5'-diphosphate. Involved in mRNA degradation. Catalyzes the phosphorolysis of single-stranded polyribonucleotides processively in the 3'- to 5'-direction. The sequence is that of Polyribonucleotide nucleotidyltransferase from Shewanella sp. (strain W3-18-1).